We begin with the raw amino-acid sequence, 496 residues long: Probable cytosol aminopeptidase (496 aa).

Mn(2+) is bound by residues K262 and D267. K274 is an active-site residue. Residues D285, D344, and E346 each coordinate Mn(2+). R348 is a catalytic residue.

The protein belongs to the peptidase M17 family. Requires Mn(2+) as cofactor.

It localises to the cytoplasm. It catalyses the reaction Release of an N-terminal amino acid, Xaa-|-Yaa-, in which Xaa is preferably Leu, but may be other amino acids including Pro although not Arg or Lys, and Yaa may be Pro. Amino acid amides and methyl esters are also readily hydrolyzed, but rates on arylamides are exceedingly low.. The enzyme catalyses Release of an N-terminal amino acid, preferentially leucine, but not glutamic or aspartic acids.. Presumably involved in the processing and regular turnover of intracellular proteins. Catalyzes the removal of unsubstituted N-terminal amino acids from various peptides. This Rhizobium leguminosarum bv. trifolii (strain WSM2304) protein is Probable cytosol aminopeptidase.